Reading from the N-terminus, the 102-residue chain is uncharacterized protein (102 aa).

The segment at 1-102 (MPVEQDGLTG…LANIREQNHQ (102 aa)) is disordered.

This is an uncharacterized protein from Caenorhabditis elegans.